A 1124-amino-acid chain; its full sequence is Putative DNA mismatch repair protein mutS homolog L359 (1124 aa).

Position 779-786 (779-786) interacts with ATP; sequence SNNWAGKS.

It belongs to the DNA mismatch repair MutS family.

May be involved in DNA-mismatch repair. The sequence is that of Putative DNA mismatch repair protein mutS homolog L359 from Acanthamoeba polyphaga (Amoeba).